Reading from the N-terminus, the 445-residue chain is MVLRKVVAILLAILPIFLFAVEPIKVVRSEKEIVVLTRFEEYHFDLEKGILKDFYTLVDGRKHVFTYGNDGFDVLDEGTPLTVIEEPIVTGVGKVSEGFSDEVSIVYNYGYVKKIFTIKNNENYTFFVDIESSKPVDVTVPRVSVDTSTDRYLENYFASFNPKTRTLVLLKHDEGLLFEGTLKVNGQKRFIVFMGPNKRTLIKKAFPEDYDVLIKALVNIPGFNKWYDSVFYGLVWFFWWLKDLTKNFGWAIMLFTLIVRLILYPLYHAQTKSLINMRKLQPQIEAIKKKYKDPTKQQEALLKLYREAGVNPASGCLMLLIQLPIFMLLWSVIRYYVEEFAYSGSFLIWKDLSAGGFSNNWLFLVITIVASYYTTLLTSQDARTAWQGIIMSVIFPFLFVGLPSGLFLYYATNTLIQLAVTYYTYKRYKIKGLTTRELLGLPKKA.

5 helical membrane passes run 6-26 (VVAI…PIKV), 248-268 (FGWA…PLYH), 313-333 (ASGC…WSVI), 352-372 (LSAG…VASY), and 388-408 (GIIM…GLFL).

Belongs to the OXA1/ALB3/YidC family. Type 1 subfamily. As to quaternary structure, interacts with the Sec translocase complex via SecD. Specifically interacts with transmembrane segments of nascent integral membrane proteins during membrane integration.

It is found in the cell inner membrane. Its function is as follows. Required for the insertion and/or proper folding and/or complex formation of integral membrane proteins into the membrane. Involved in integration of membrane proteins that insert both dependently and independently of the Sec translocase complex, as well as at least some lipoproteins. Aids folding of multispanning membrane proteins. The polypeptide is Membrane protein insertase YidC (Thermotoga maritima (strain ATCC 43589 / DSM 3109 / JCM 10099 / NBRC 100826 / MSB8)).